The primary structure comprises 203 residues: Urease accessory protein UreG (203 aa).

14 to 21 contacts GTP; sequence GPVGSGKT.

The protein belongs to the SIMIBI class G3E GTPase family. UreG subfamily. As to quaternary structure, homodimer. UreD, UreF and UreG form a complex that acts as a GTP-hydrolysis-dependent molecular chaperone, activating the urease apoprotein by helping to assemble the nickel containing metallocenter of UreC. The UreE protein probably delivers the nickel.

The protein resides in the cytoplasm. Its function is as follows. Facilitates the functional incorporation of the urease nickel metallocenter. This process requires GTP hydrolysis, probably effectuated by UreG. The chain is Urease accessory protein UreG from Rhizobium johnstonii (strain DSM 114642 / LMG 32736 / 3841) (Rhizobium leguminosarum bv. viciae).